A 596-amino-acid polypeptide reads, in one-letter code: uncharacterized protein (596 aa).

Composition is skewed to basic residues over residues 1-10 (MRLRSQKRGN) and 18-29 (KTRKGKGKKLKP). Residues 1 to 30 (MRLRSQKRGNKFVALPAKTRKGKGKKLKPK) form a disordered region.

This is an uncharacterized protein from Magallana gigas (Pacific oyster).